The chain runs to 200 residues: MPSLYLASGSPRRRELLTQIGVSFTVLNAQIDETPFDHETPAAYVERLALGKAQAGLSVLAAEQQACVMGADTAVVLDGRILGKPADEADALAMLTALSGREHEVMTAVALSDRHRSETRIVTSRVRFRPIQPHEAQAYWASGEPADKAGGYAIQGLAAIFVEGLQGSYSGVVGLPLCETAELLGHFGIPCWQCLEGDES.

Asp-72 acts as the Proton acceptor in catalysis.

It belongs to the Maf family. YhdE subfamily. Requires a divalent metal cation as cofactor.

It localises to the cytoplasm. The catalysed reaction is dTTP + H2O = dTMP + diphosphate + H(+). It carries out the reaction UTP + H2O = UMP + diphosphate + H(+). In terms of biological role, nucleoside triphosphate pyrophosphatase that hydrolyzes dTTP and UTP. May have a dual role in cell division arrest and in preventing the incorporation of modified nucleotides into cellular nucleic acids. The sequence is that of dTTP/UTP pyrophosphatase from Pseudomonas savastanoi pv. phaseolicola (strain 1448A / Race 6) (Pseudomonas syringae pv. phaseolicola (strain 1448A / Race 6)).